Consider the following 332-residue polypeptide: NADH-quinone oxidoreductase subunit H (332 aa).

8 consecutive transmembrane segments (helical) span residues 11–31 (TYKILFLLVPVLVSVAMIVWL), 77–97 (VIFILAPIVTMTLALVSWAVI), 110–130 (VGVLYLFAVSSLGVYGIIMGG), 156–176 (IGVIIINVLLCVGSLNLNDII), 182–202 (LWFIIPLFPMFVIFFISALAE), 240–260 (NILLMCAMGSILFLGGWLSPI), 268–288 (IPGAIWMIFKILFLFVLFALV), and 307–327 (IFLPLSLTWVVLTASYLFYFN).

Belongs to the complex I subunit 1 family. NDH-1 is composed of 14 different subunits. Subunits NuoA, H, J, K, L, M, N constitute the membrane sector of the complex.

The protein resides in the cell inner membrane. It catalyses the reaction a quinone + NADH + 5 H(+)(in) = a quinol + NAD(+) + 4 H(+)(out). NDH-1 shuttles electrons from NADH, via FMN and iron-sulfur (Fe-S) centers, to quinones in the respiratory chain. The immediate electron acceptor for the enzyme in this species is believed to be ubiquinone. Couples the redox reaction to proton translocation (for every two electrons transferred, four hydrogen ions are translocated across the cytoplasmic membrane), and thus conserves the redox energy in a proton gradient. This subunit may bind ubiquinone. This Pelagibacter ubique (strain HTCC1062) protein is NADH-quinone oxidoreductase subunit H.